Consider the following 529-residue polypeptide: Peptide chain release factor 3 (529 aa).

The 269-residue stretch at 7–275 folds into the tr-type G domain; that stretch reads EQRRTFGIIS…AVVELAPSPR (269 aa). GTP contacts are provided by residues 16–23, 84–88, and 138–141; these read SHPDAGKT, DTPGH, and NKLD.

The protein belongs to the TRAFAC class translation factor GTPase superfamily. Classic translation factor GTPase family. PrfC subfamily.

It localises to the cytoplasm. Increases the formation of ribosomal termination complexes and stimulates activities of RF-1 and RF-2. It binds guanine nucleotides and has strong preference for UGA stop codons. It may interact directly with the ribosome. The stimulation of RF-1 and RF-2 is significantly reduced by GTP and GDP, but not by GMP. This Syntrophus aciditrophicus (strain SB) protein is Peptide chain release factor 3.